The chain runs to 196 residues: Imidazole glycerol phosphate synthase subunit HisH (196 aa).

Residues 2–196 enclose the Glutamine amidotransferase type-1 domain; sequence KATLINYGVG…LRNFYSWVKR (195 aa). Cys-76 functions as the Nucleophile in the catalytic mechanism. Active-site residues include His-175 and Glu-177.

In terms of assembly, heterodimer of HisH and HisF.

The protein resides in the cytoplasm. The catalysed reaction is 5-[(5-phospho-1-deoxy-D-ribulos-1-ylimino)methylamino]-1-(5-phospho-beta-D-ribosyl)imidazole-4-carboxamide + L-glutamine = D-erythro-1-(imidazol-4-yl)glycerol 3-phosphate + 5-amino-1-(5-phospho-beta-D-ribosyl)imidazole-4-carboxamide + L-glutamate + H(+). It catalyses the reaction L-glutamine + H2O = L-glutamate + NH4(+). It participates in amino-acid biosynthesis; L-histidine biosynthesis; L-histidine from 5-phospho-alpha-D-ribose 1-diphosphate: step 5/9. Functionally, IGPS catalyzes the conversion of PRFAR and glutamine to IGP, AICAR and glutamate. The HisH subunit catalyzes the hydrolysis of glutamine to glutamate and ammonia as part of the synthesis of IGP and AICAR. The resulting ammonia molecule is channeled to the active site of HisF. The protein is Imidazole glycerol phosphate synthase subunit HisH of Sulfurisphaera tokodaii (strain DSM 16993 / JCM 10545 / NBRC 100140 / 7) (Sulfolobus tokodaii).